Reading from the N-terminus, the 158-residue chain is Small ribosomal subunit protein bS6 (158 aa).

Residues 92-149 (RVDEHEEGPSAMMRKADRDRERDDRGPREGGFRGDREGRGDRDGFRGDRGPRRPREDA) are compositionally biased toward basic and acidic residues. The tract at residues 92-158 (RVDEHEEGPS…ADAPAAAVEE (67 aa)) is disordered.

The protein belongs to the bacterial ribosomal protein bS6 family.

In terms of biological role, binds together with bS18 to 16S ribosomal RNA. The polypeptide is Small ribosomal subunit protein bS6 (Rhodopseudomonas palustris (strain ATCC BAA-98 / CGA009)).